The following is a 101-amino-acid chain: Small ribosomal subunit protein uS14 (101 aa).

This sequence belongs to the universal ribosomal protein uS14 family. Part of the 30S ribosomal subunit. Contacts proteins S3 and S10.

Functionally, binds 16S rRNA, required for the assembly of 30S particles and may also be responsible for determining the conformation of the 16S rRNA at the A site. This Neorickettsia sennetsu (strain ATCC VR-367 / Miyayama) (Ehrlichia sennetsu) protein is Small ribosomal subunit protein uS14.